The sequence spans 452 residues: Translation initiation factor eIF2B subunit gamma (452 aa).

Methionine 1 bears the N-acetylmethionine mark. Serine 260 is modified (phosphoserine).

It belongs to the eIF-2B gamma/epsilon subunits family. In terms of assembly, component of the translation initiation factor 2B (eIF2B) complex which is a heterodecamer of two sets of five different subunits: alpha, beta, gamma, delta and epsilon. Subunits alpha, beta and delta comprise a regulatory subcomplex and subunits epsilon and gamma comprise a catalytic subcomplex. Within the complex, the hexameric regulatory complex resides at the center, with the two heterodimeric catalytic subcomplexes bound on opposite sides.

The protein localises to the cytoplasm. It localises to the cytosol. Its activity is regulated as follows. Activated by the chemical integrated stress response (ISR) inhibitor ISRIB which stimulates guanine nucleotide exchange factor activity for both phosphorylated and unphosphorylated eIF2. Acts as a component of the translation initiation factor 2B (eIF2B) complex, which catalyzes the exchange of GDP for GTP on the eukaryotic initiation factor 2 (eIF2) complex gamma subunit. Its guanine nucleotide exchange factor activity is repressed when bound to eIF2 complex phosphorylated on the alpha subunit, thereby limiting the amount of methionyl-initiator methionine tRNA available to the ribosome and consequently global translation is repressed. This chain is Translation initiation factor eIF2B subunit gamma (EIF2B3), found in Homo sapiens (Human).